We begin with the raw amino-acid sequence, 147 residues long: Hemoglobin subunit beta (147 aa).

Position 2 is an N-acetylvaline (Val-2). The Globin domain occupies His-3 to His-147. Residue Thr-13 is modified to Phosphothreonine. Residue Ser-45 is modified to Phosphoserine. At Lys-60 the chain carries N6-acetyllysine. Residue His-64 participates in heme b binding. Lys-83 bears the N6-acetyllysine mark. Residue His-93 coordinates heme b. Cys-94 bears the S-nitrosocysteine mark. N6-acetyllysine is present on Lys-145.

It belongs to the globin family. As to quaternary structure, heterotetramer of two alpha chains and two beta chains. As to expression, red blood cells.

Involved in oxygen transport from the lung to the various peripheral tissues. In Papio anubis (Olive baboon), this protein is Hemoglobin subunit beta (HBB).